The primary structure comprises 238 residues: Uridylate kinase (238 aa).

An ATP-binding site is contributed by 10-13; that stretch reads KFSG. The tract at residues 18–23 is involved in allosteric activation by GTP; it reads GGNGFG. Gly52 serves as a coordination point for UMP. ATP is bound by residues Gly53 and Arg57. UMP contacts are provided by residues Asp73 and 134 to 141; that span reads TGNPFFTT. Residues Thr161, Tyr167, and Asp170 each coordinate ATP.

Belongs to the UMP kinase family. Homohexamer.

It localises to the cytoplasm. It carries out the reaction UMP + ATP = UDP + ADP. It participates in pyrimidine metabolism; CTP biosynthesis via de novo pathway; UDP from UMP (UMPK route): step 1/1. Its activity is regulated as follows. Allosterically activated by GTP. Inhibited by UTP. Catalyzes the reversible phosphorylation of UMP to UDP. This is Uridylate kinase from Campylobacter fetus subsp. fetus (strain 82-40).